Consider the following 284-residue polypeptide: Malonyl-[acyl-carrier protein] O-methyltransferase (284 aa).

It belongs to the methyltransferase superfamily.

The catalysed reaction is malonyl-[ACP] + S-adenosyl-L-methionine = malonyl-[ACP] methyl ester + S-adenosyl-L-homocysteine. It participates in cofactor biosynthesis; biotin biosynthesis. Converts the free carboxyl group of a malonyl-thioester to its methyl ester by transfer of a methyl group from S-adenosyl-L-methionine (SAM). It allows to synthesize pimeloyl-ACP via the fatty acid synthetic pathway. The sequence is that of Malonyl-[acyl-carrier protein] O-methyltransferase from Legionella pneumophila subsp. pneumophila (strain Philadelphia 1 / ATCC 33152 / DSM 7513).